A 338-amino-acid chain; its full sequence is D-erythrose-4-phosphate dehydrogenase (338 aa).

NAD(+) is bound at residue 11 to 12 (RI). Substrate is bound by residues 153–155 (SCT), Arg-199, 212–213 (TK), and Arg-235. The Nucleophile role is filled by Cys-154. Asn-317 is a binding site for NAD(+).

Belongs to the glyceraldehyde-3-phosphate dehydrogenase family. Epd subfamily. In terms of assembly, homotetramer.

Its subcellular location is the cytoplasm. The enzyme catalyses D-erythrose 4-phosphate + NAD(+) + H2O = 4-phospho-D-erythronate + NADH + 2 H(+). It functions in the pathway cofactor biosynthesis; pyridoxine 5'-phosphate biosynthesis; pyridoxine 5'-phosphate from D-erythrose 4-phosphate: step 1/5. Catalyzes the NAD-dependent conversion of D-erythrose 4-phosphate to 4-phosphoerythronate. This Shewanella piezotolerans (strain WP3 / JCM 13877) protein is D-erythrose-4-phosphate dehydrogenase.